Reading from the N-terminus, the 228-residue chain is Death domain-containing membrane protein NRADD (228 aa).

At 1-52 (MLHNVSKGVVYSDTALKGQDGDREGMWVGAGGALAPNTSSLFPPEPPGASSN) the chain is on the extracellular side. N-linked (GlcNAc...) asparagine glycans are attached at residues Asn-4 and Asn-37. A helical; Signal-anchor for type III membrane protein membrane pass occupies residues 53-73 (IIPVYCALLATVVLGLLAYVA). The Cytoplasmic portion of the chain corresponds to 74 to 228 (FKCWRSRKQR…SSPAEGCSVV (155 aa)). Positions 143–222 (EEVQRLLILG…DVVQVLSSPA (80 aa)) constitute a Death domain.

As to quaternary structure, interacts with NTRK1. Isoform 1 and isoform 2 interact with NGFR. Interacts with SORT1. In terms of processing, isoform 1 is N-glycosylated. Isoform 2 is not N-glycosylated. In terms of tissue distribution, detected in embryo, including embryonic brain. Detected at very low levels in adult testis, spleen, thymus and lung.

The protein localises to the cell membrane. The protein resides in the nucleus. In terms of biological role, modulates NTRK1 signaling. Can activate several intracellular signaling pathways, leading to activation of JUN. Promotes translocation of SORT1 to the cell membrane, and thereby hinders lysosomal degradation of SOTR1 and promotes its interaction with NGFR. Both isoform 1 and isoform 2 promote apoptosis. The protein is Death domain-containing membrane protein NRADD (Nradd) of Rattus norvegicus (Rat).